The sequence spans 90 residues: U7-theraphotoxin-Hhn1h (90 aa).

The N-terminal stretch at 1–19 is a signal peptide; that stretch reads MKTAIFTVVLALAVFAVLS. A propeptide spanning residues 20-50 is cleaved from the precursor; it reads FGWEANEKALSEEFTELIHEKEAASETEARE. 3 disulfides stabilise this stretch: cysteine 51–cysteine 65, cysteine 58–cysteine 70, and cysteine 64–cysteine 81.

It belongs to the neurotoxin 10 (Hwtx-1) family. 13 (Hntx-13) subfamily. As to expression, expressed by the venom gland.

It is found in the secreted. Ion channel inhibitor. This chain is U7-theraphotoxin-Hhn1h, found in Cyriopagopus hainanus (Chinese bird spider).